The primary structure comprises 69 residues: Toxin Lc b (69 aa).

4 disulfide bridges follow: Cys-3–Cys-20, Cys-13–Cys-41, Cys-45–Cys-56, and Cys-57–Cys-62.

This sequence belongs to the three-finger toxin family. Long-chain subfamily. Type II alpha-neurotoxin sub-subfamily. Expressed by the venom gland.

The protein localises to the secreted. Its function is as follows. Binds with high affinity to muscular nicotinic acetylcholine receptors (nAChRs), whereas it binds with a low affinity to neuronal alpha-7/CHRNA7 nAChRs. The chain is Toxin Lc b from Laticauda colubrina (Yellow-lipped sea krait).